Reading from the N-terminus, the 244-residue chain is CTD nuclear envelope phosphatase 1 (244 aa).

Residues 7 to 29 (LLGLRTFVAFAAKLWSFFIYLLR) form a helical membrane-spanning segment. Positions 57-224 (AQVKRKILVL…LNLLPMLDAL (168 aa)) constitute an FCP1 homology domain.

Belongs to the dullard family. (Microbial infection) Interacts with Chandipura virus matrix protein. As to quaternary structure, interacts with CNEP1R1; the complex dephosphorylates LPIN1 and LPIN2. In terms of tissue distribution, muscle specific with lower expression in other metabolic tissues.

Its subcellular location is the endoplasmic reticulum membrane. The protein resides in the nucleus membrane. The enzyme catalyses O-phospho-L-seryl-[protein] + H2O = L-seryl-[protein] + phosphate. It carries out the reaction O-phospho-L-threonyl-[protein] + H2O = L-threonyl-[protein] + phosphate. Functionally, serine/threonine protein phosphatase forming with CNEP1R1 an active phosphatase complex that dephosphorylates and may activate LPIN1 and LPIN2. LPIN1 and LPIN2 are phosphatidate phosphatases that catalyze the conversion of phosphatidic acid to diacylglycerol and control the metabolism of fatty acids at different levels. May indirectly modulate the lipid composition of nuclear and/or endoplasmic reticulum membranes and be required for proper nuclear membrane morphology and/or dynamics. May also indirectly regulate the production of lipid droplets and triacylglycerol. May antagonize BMP signaling. This chain is CTD nuclear envelope phosphatase 1 (CTDNEP1), found in Homo sapiens (Human).